A 400-amino-acid polypeptide reads, in one-letter code: CCA-adding enzyme (400 aa).

Residues G28 and R31 each contribute to the ATP site. Residues G28 and R31 each coordinate CTP. Residues D41 and D43 each coordinate Mg(2+). R112, D155, R158, R161, and R164 together coordinate ATP. CTP contacts are provided by R112, D155, R158, R161, and R164.

The protein belongs to the tRNA nucleotidyltransferase/poly(A) polymerase family. Bacterial CCA-adding enzyme type 3 subfamily. In terms of assembly, homodimer. Mg(2+) is required as a cofactor.

It carries out the reaction a tRNA precursor + 2 CTP + ATP = a tRNA with a 3' CCA end + 3 diphosphate. The enzyme catalyses a tRNA with a 3' CCA end + 2 CTP + ATP = a tRNA with a 3' CCACCA end + 3 diphosphate. Functionally, catalyzes the addition and repair of the essential 3'-terminal CCA sequence in tRNAs without using a nucleic acid template. Adds these three nucleotides in the order of C, C, and A to the tRNA nucleotide-73, using CTP and ATP as substrates and producing inorganic pyrophosphate. tRNA 3'-terminal CCA addition is required both for tRNA processing and repair. Also involved in tRNA surveillance by mediating tandem CCA addition to generate a CCACCA at the 3' terminus of unstable tRNAs. While stable tRNAs receive only 3'-terminal CCA, unstable tRNAs are marked with CCACCA and rapidly degraded. The chain is CCA-adding enzyme from Oceanobacillus iheyensis (strain DSM 14371 / CIP 107618 / JCM 11309 / KCTC 3954 / HTE831).